Here is a 251-residue protein sequence, read N- to C-terminus: CDP-diacylglycerol pyrophosphatase (251 aa).

The helical transmembrane segment at 4–24 (AGLLFLVMIVIAVVAAGIGYW) threads the bilayer.

Belongs to the Cdh family.

The protein localises to the cell inner membrane. The enzyme catalyses a CDP-1,2-diacyl-sn-glycerol + H2O = a 1,2-diacyl-sn-glycero-3-phosphate + CMP + 2 H(+). Its pathway is phospholipid metabolism; CDP-diacylglycerol degradation; phosphatidate from CDP-diacylglycerol: step 1/1. This is CDP-diacylglycerol pyrophosphatase from Escherichia coli O127:H6 (strain E2348/69 / EPEC).